We begin with the raw amino-acid sequence, 578 residues long: Arginine--tRNA ligase (578 aa).

Residues 127–137 carry the 'HIGH' region motif; that stretch reads PNLAKEMHVGH.

The protein belongs to the class-I aminoacyl-tRNA synthetase family. Monomer.

Its subcellular location is the cytoplasm. The enzyme catalyses tRNA(Arg) + L-arginine + ATP = L-arginyl-tRNA(Arg) + AMP + diphosphate. This chain is Arginine--tRNA ligase, found in Pseudomonas putida (strain GB-1).